Consider the following 209-residue polypeptide: FAS-associated death domain protein (209 aa).

The region spanning 3–81 (PFLVLLHSVS…RKDLLLRLDD (79 aa)) is the DED domain. Residues 97-181 (LRAAMEIICD…VVADLIEEDQ (85 aa)) enclose the Death domain. Residues 187-200 (QSGSANPGSFTAWD) show a composition bias toward polar residues. Residues 187-209 (QSGSANPGSFTAWDSGSAAPGAS) are disordered.

Can self-associate. Component of the AIM2 PANoptosome complex, a multiprotein complex that drives inflammatory cell death (PANoptosis). Component of the death-induced signaling complex (DISC) composed of cell surface receptor FAS/CD95 or TNFRSF1A, adapter protein FADD and the CASP8 protease; recruitment of CASP8 to the complex is required for processing of CASP8 into the p18 and p10 subunits. Interacts (via death domain) with FAS (via death domain). Interacts directly (via DED domain) with NOL3 (via CARD domain); inhibits death-inducing signaling complex (DISC) assembly by inhibiting the increase in FAS-FADD binding induced by FAS activation. Interacts with CFLAR, PEA15 and MBD4. When phosphorylated, part of a complex containing HIPK3 and FAS. May interact with MAVS/IPS1. Interacts with MOCV v-CFLAR protein and PIDD1. Interacts with RIPK1 and TRADD. Interacts with stimulated TNFRSF10B. Interacts with DDX24. Phosphorylated.

It localises to the cytoplasm. Functionally, apoptotic adapter molecule that recruits caspases CASP8 or CASP10 to the activated FAS/CD95 or TNFRSF1A/TNFR-1 receptors. The resulting aggregate called the death-inducing signaling complex (DISC) performs CASP8 proteolytic activation. Active CASP8 initiates the subsequent cascade of caspases mediating apoptosis. Involved in interferon-mediated antiviral immune response, playing a role in the positive regulation of interferon signaling. This Bos taurus (Bovine) protein is FAS-associated death domain protein.